We begin with the raw amino-acid sequence, 289 residues long: O-methyltransferase asqN (289 aa).

Asp-155 lines the S-adenosyl-L-methionine pocket. His-195 acts as the Proton acceptor in catalysis.

Belongs to the class I-like SAM-binding methyltransferase superfamily. Cation-independent O-methyltransferase family.

The protein operates within secondary metabolite biosynthesis. It functions in the pathway alkaloid biosynthesis. Its pathway is mycotoxin biosynthesis. Functionally, O-methyltransferase; part of the gene cluster that mediates the biosynthesis of the aspoquinolone mycotoxins. The role of asqN within the aspoquinolone pathway has still to be determined. The first step of the pathway is catalyzed by the nonribosomal peptide synthetase asqK that condenses anthranilic acid and O-methyl-L-tyrosine to produce 4'-methoxycyclopeptin. 4'-methoxycyclopeptin is then converted to 4'-methoxydehydrocyclopeptin by the ketoglutarate-dependent dioxygenase asqJ. AsqJ also converts its first product 4'-methoxydehydrocyclopeptin to 4'-methoxycyclopenin. The following conversion of 4'-methoxycyclopenin into 4'-methoxyviridicatin is catalyzed by the cyclopenase asqI. 4'-methoxyviridicatin is the precursor of quinolone natural products, and is further converted to quinolinone B. The prenyltransferase asqH1 then catalyzes the canonical Friedel-Crafts alkylation of quinolinone B with dimethylallyl cation to yield dimethylallyl quinolone, which is subjected to FAD-dependent dehydrogenation by the FAD-linked oxidoreductase asqF to yield conjugated aryl diene. The delta(3') double bond then serves as the site of the second alkylation with DMAPP catalyzed by the prenyltransferase asqH2 to yield a carbenium ion intermediate, which can be attacked by H(2)O to yield a styrenyl quinolone containing a C3'-hydroxyprenyl chain. The FAD-dependent monooxygenase asqG performs epoxidation of the terminal C7'-C8' olefin. Finally, after dehydratation of the epoxide at C3 by asqC, the quinolone epoxide rearrangement protein asqO catalyzes an enzymatic 3-exo-tet cyclization to yield the cyclopropyl-THF ring system in aspoquinolone. In Emericella nidulans (strain FGSC A4 / ATCC 38163 / CBS 112.46 / NRRL 194 / M139) (Aspergillus nidulans), this protein is O-methyltransferase asqN.